The following is a 333-amino-acid chain: tRNA N6-adenosine threonylcarbamoyltransferase (333 aa).

Fe cation is bound by residues histidine 108 and histidine 112. Substrate contacts are provided by residues 129-133 (LVSGG), aspartate 161, glutamate 178, and serine 258. A Fe cation-binding site is contributed by aspartate 286.

The protein belongs to the KAE1 / TsaD family. Requires Fe(2+) as cofactor.

The protein localises to the cytoplasm. The enzyme catalyses L-threonylcarbamoyladenylate + adenosine(37) in tRNA = N(6)-L-threonylcarbamoyladenosine(37) in tRNA + AMP + H(+). Its function is as follows. Required for the formation of a threonylcarbamoyl group on adenosine at position 37 (t(6)A37) in tRNAs that read codons beginning with adenine. Is probably involved in the transfer of the threonylcarbamoyl moiety of threonylcarbamoyl-AMP (TC-AMP) to the N6 group of A37. This Pyrobaculum islandicum (strain DSM 4184 / JCM 9189 / GEO3) protein is tRNA N6-adenosine threonylcarbamoyltransferase.